Here is a 274-residue protein sequence, read N- to C-terminus: Large ribosomal subunit protein uL2 (274 aa).

The segment at 223-274 is disordered; the sequence is VAMNPVDHPHGGGEGRTSGGRHPVSPWGMPTKGFKTRKNKSTDKYIVRRRNK.

This sequence belongs to the universal ribosomal protein uL2 family. Part of the 50S ribosomal subunit. Forms a bridge to the 30S subunit in the 70S ribosome.

Its function is as follows. One of the primary rRNA binding proteins. Required for association of the 30S and 50S subunits to form the 70S ribosome, for tRNA binding and peptide bond formation. It has been suggested to have peptidyltransferase activity; this is somewhat controversial. Makes several contacts with the 16S rRNA in the 70S ribosome. This is Large ribosomal subunit protein uL2 from Aliivibrio fischeri (strain ATCC 700601 / ES114) (Vibrio fischeri).